Consider the following 93-residue polypeptide: DNA-binding protein Fis (93 aa).

The segment at residues 74 to 93 is a DNA-binding region (H-T-H motif); that stretch reads QTRAAQMMGINRGTLRKKLK.

It belongs to the transcriptional regulatory Fis family. As to quaternary structure, homodimer.

Functionally, activates ribosomal RNA transcription. Plays a direct role in upstream activation of rRNA promoters. This chain is DNA-binding protein Fis, found in Proteus vulgaris.